A 439-amino-acid chain; its full sequence is Forkhead box protein J1-B (439 aa).

Residues 124–218 (KPPYSYATLI…MNGAMKKRRL (95 aa)) constitute a DNA-binding region (fork-head).

This sequence belongs to the FOXJ1 family.

The protein localises to the nucleus. In terms of biological role, key transcription factor required for motile ciliogenesis. Activates genes essential for motile cilia formation and function. The protein is Forkhead box protein J1-B (foxj1-b) of Xenopus laevis (African clawed frog).